A 360-amino-acid chain; its full sequence is MTAQDSTQTEDRKDDHLQIVQERDVETTGTGFDDVHLVHNALPELDYDAIDPSIDFLGHDLSAPIFIESMTGGHHNTTEINRALARAASETGIAMGLGSQRAGLELDDERVLESYTVVRDAAPDAFIYGNLGAAQLREYDIEMVEQAVEMIDADALAVHLNFLQEATQPEGDVDGRNCVAAIERVSEALSVPIIVKETGNGISGETARELTAAGVDALDVAGKGGTTWSGIEAYRAAAANAPRQKQIGTLFREWGIPTAASTIECVAEHDCVIASGGVRTGLDVAKAIALGARAGGLAKPFLKPATDGPDAVIERVGDLIAELRTAMFVTGSGSIDELQQVEYVLHGKTREYVEQRTSSE.

12-13 (RK) is a binding site for substrate. FMN-binding positions include 69 to 71 (SMT), Ser99, and Asn130. Position 99 to 101 (99 to 101 (SQR)) interacts with substrate. Gln164 is a binding site for substrate. Mg(2+) is bound at residue Glu165. Residues Lys196, Thr226, 277-279 (GVR), and 298-299 (AK) each bind FMN.

This sequence belongs to the IPP isomerase type 2 family. In terms of assembly, homooctamer. Dimer of tetramers. The cofactor is FMN. Requires NADPH as cofactor. Mg(2+) is required as a cofactor.

Its subcellular location is the cytoplasm. The catalysed reaction is isopentenyl diphosphate = dimethylallyl diphosphate. In terms of biological role, involved in the biosynthesis of isoprenoids. Catalyzes the 1,3-allylic rearrangement of the homoallylic substrate isopentenyl (IPP) to its allylic isomer, dimethylallyl diphosphate (DMAPP). This is Isopentenyl-diphosphate delta-isomerase from Halobacterium salinarum (strain ATCC 700922 / JCM 11081 / NRC-1) (Halobacterium halobium).